We begin with the raw amino-acid sequence, 189 residues long: Interferon alpha-H (189 aa).

The N-terminal stretch at methionine 1 to glycine 23 is a signal peptide. Cystine bridges form between cysteine 24–cysteine 122 and cysteine 52–cysteine 162.

It belongs to the alpha/beta interferon family.

It is found in the secreted. In terms of biological role, produced by macrophages, IFN-alpha have antiviral activities. Interferon stimulates the production of two enzymes: a protein kinase and an oligoadenylate synthetase. This chain is Interferon alpha-H (IFNAH), found in Bos taurus (Bovine).